Here is a 530-residue protein sequence, read N- to C-terminus: 2,3-bisphosphoglycerate-independent phosphoglycerate mutase (530 aa).

Residues Asp-15 and Ser-65 each coordinate Mn(2+). Ser-65 (phosphoserine intermediate) is an active-site residue. Substrate-binding positions include His-126, 155–156 (RD), Arg-187, Arg-193, 257–260 (RPDR), and Lys-330. The Mn(2+) site is built by Asp-397, His-401, Asp-438, His-439, and His-456.

It belongs to the BPG-independent phosphoglycerate mutase family. As to quaternary structure, monomer. Mn(2+) is required as a cofactor.

The enzyme catalyses (2R)-2-phosphoglycerate = (2R)-3-phosphoglycerate. Its pathway is carbohydrate degradation; glycolysis; pyruvate from D-glyceraldehyde 3-phosphate: step 3/5. Functionally, catalyzes the interconversion of 2-phosphoglycerate and 3-phosphoglycerate. The sequence is that of 2,3-bisphosphoglycerate-independent phosphoglycerate mutase from Synechococcus sp. (strain JA-2-3B'a(2-13)) (Cyanobacteria bacterium Yellowstone B-Prime).